Reading from the N-terminus, the 407-residue chain is Probable peptidoglycan glycosyltransferase FtsW (407 aa).

The Cytoplasmic segment spans residues 1–25; the sequence is MSIDFRNIIKPYPSPIITGRGIDLD. A helical membrane pass occupies residues 26–46; it reads FPMLAGCLALLGLGLVMITSA. Residues 47 to 65 are Periplasmic-facing; the sequence is SSEVAAVQSGNTLYMMIRH. Residues 66 to 86 traverse the membrane as a helical segment; sequence LVYLVIGLGACIVTMMIPIAT. The Cytoplasmic segment spans residues 87–89; that stretch reads WQR. The helical transmembrane segment at 90–110 threads the bilayer; sequence LGWLMLIGAFGLLIMVILPGI. Residues 111–119 lie on the Periplasmic side of the membrane; that stretch reads GREVNGSMR. A helical transmembrane segment spans residues 120-140; the sequence is WIGFGAFNVQPSEIAKVFVVI. The Cytoplasmic portion of the chain corresponds to 141–155; that stretch reads YLAGYLVRRQKEVRE. A helical membrane pass occupies residues 156–176; sequence SWMGFFKPFIVLLPMAGLLLM. The Periplasmic segment spans residues 177–181; sequence EPDFG. A helical transmembrane segment spans residues 182 to 202; that stretch reads ATVVMMGAAAAMLFLGGVGLF. Residue R203 is a topological domain, cytoplasmic. A helical membrane pass occupies residues 204-224; the sequence is FTLMVVLAVAAVTVLVQAQPY. Residues 225–283 lie on the Periplasmic side of the membrane; the sequence is RMARLITFTDPWSDQFGSGYQLTQALIAFGRGEWLGVGLGNSVQKQFYLPEAHTDFVFS. The helical transmembrane segment at 284-304 threads the bilayer; the sequence is VLAEELGVVGSLCTVALFVFV. Residues 305 to 321 lie on the Cytoplasmic side of the membrane; the sequence is CVRGMYIGMWAEKAKQY. The chain crosses the membrane as a helical span at residues 322-342; sequence FAAYVAYGLSFLWIGQFLINI. The Periplasmic segment spans residues 343-355; it reads GVNVGLLPTKGLT. Residues 356–376 form a helical membrane-spanning segment; the sequence is LPFLSYGGSSLVICCACLGLL. The Cytoplasmic segment spans residues 377-407; that stretch reads LRIEWESRTHLGSEEMEFSESDFAEEPTHGR.

This sequence belongs to the SEDS family. FtsW subfamily.

The protein localises to the cell inner membrane. It catalyses the reaction [GlcNAc-(1-&gt;4)-Mur2Ac(oyl-L-Ala-gamma-D-Glu-L-Lys-D-Ala-D-Ala)](n)-di-trans,octa-cis-undecaprenyl diphosphate + beta-D-GlcNAc-(1-&gt;4)-Mur2Ac(oyl-L-Ala-gamma-D-Glu-L-Lys-D-Ala-D-Ala)-di-trans,octa-cis-undecaprenyl diphosphate = [GlcNAc-(1-&gt;4)-Mur2Ac(oyl-L-Ala-gamma-D-Glu-L-Lys-D-Ala-D-Ala)](n+1)-di-trans,octa-cis-undecaprenyl diphosphate + di-trans,octa-cis-undecaprenyl diphosphate + H(+). It participates in cell wall biogenesis; peptidoglycan biosynthesis. In terms of biological role, peptidoglycan polymerase that is essential for cell division. The protein is Probable peptidoglycan glycosyltransferase FtsW of Pseudomonas fluorescens (strain SBW25).